The following is a 487-amino-acid chain: Glutamate--tRNA ligase 2 (487 aa).

Positions 31 to 41 match the 'HIGH' region motif; sequence PSPTGHLHVGG. The 'KMSKS' region motif lies at 254-258; it reads PLSKR. Lys257 contributes to the ATP binding site.

This sequence belongs to the class-I aminoacyl-tRNA synthetase family. Glutamate--tRNA ligase type 1 subfamily. As to quaternary structure, monomer.

It localises to the cytoplasm. It carries out the reaction tRNA(Glu) + L-glutamate + ATP = L-glutamyl-tRNA(Glu) + AMP + diphosphate. Catalyzes the attachment of glutamate to tRNA(Glu) in a two-step reaction: glutamate is first activated by ATP to form Glu-AMP and then transferred to the acceptor end of tRNA(Glu). In Thermotoga maritima (strain ATCC 43589 / DSM 3109 / JCM 10099 / NBRC 100826 / MSB8), this protein is Glutamate--tRNA ligase 2.